The chain runs to 62 residues: DNA-directed RNA polymerase subunit omega (62 aa).

Belongs to the RNA polymerase subunit omega family. The RNAP catalytic core consists of 2 alpha, 1 beta, 1 beta' and 1 omega subunit. When a sigma factor is associated with the core the holoenzyme is formed, which can initiate transcription.

It carries out the reaction RNA(n) + a ribonucleoside 5'-triphosphate = RNA(n+1) + diphosphate. Promotes RNA polymerase assembly. Latches the N- and C-terminal regions of the beta' subunit thereby facilitating its interaction with the beta and alpha subunits. This chain is DNA-directed RNA polymerase subunit omega, found in Wigglesworthia glossinidia brevipalpis.